We begin with the raw amino-acid sequence, 153 residues long: 3-hydroxyacyl-[acyl-carrier-protein] dehydratase FabZ (153 aa).

The active site involves His54.

This sequence belongs to the thioester dehydratase family. FabZ subfamily.

The protein localises to the cytoplasm. It carries out the reaction a (3R)-hydroxyacyl-[ACP] = a (2E)-enoyl-[ACP] + H2O. Involved in unsaturated fatty acids biosynthesis. Catalyzes the dehydration of short chain beta-hydroxyacyl-ACPs and long chain saturated and unsaturated beta-hydroxyacyl-ACPs. The protein is 3-hydroxyacyl-[acyl-carrier-protein] dehydratase FabZ of Shewanella frigidimarina (strain NCIMB 400).